The sequence spans 283 residues: Putative UTP--glucose-1-phosphate uridylyltransferase (283 aa).

This sequence belongs to the UDPGP type 2 family.

It catalyses the reaction alpha-D-glucose 1-phosphate + UTP + H(+) = UDP-alpha-D-glucose + diphosphate. The chain is Putative UTP--glucose-1-phosphate uridylyltransferase from Methanocaldococcus jannaschii (strain ATCC 43067 / DSM 2661 / JAL-1 / JCM 10045 / NBRC 100440) (Methanococcus jannaschii).